The sequence spans 87 residues: Putative defensin-like protein 231 (87 aa).

The signal sequence occupies residues 1–26 (MKFATCFLVSYVLVFLVLSVCKEVEA). Disulfide bonds link C30/C85, C40/C66, C48/C79, and C64/C81.

This sequence belongs to the DEFL family.

The protein localises to the secreted. This chain is Putative defensin-like protein 231 (SCRL25), found in Arabidopsis thaliana (Mouse-ear cress).